The primary structure comprises 172 residues: Stellate protein CG33237 (172 aa).

This sequence belongs to the casein kinase 2 subunit beta family. Interacts in vitro with the casein kinase 2 alpha subunit (CkII-alpha). The relevance of such interaction is however unclear in vivo. In terms of tissue distribution, probably not expressed in wild-type flies. In males lacking the Y chromosome, it is testis-specific and constitutes the main component of star-shaped crystals.

Its function is as follows. Unknown. In males lacking the Y chromosome, its strong overexpression leads to the appearance of proteinaceous star-shaped crystals in the primary spermatocytes causing meiotic drive, possibly by interfering with normal casein kinase 2 activity. This chain is Stellate protein CG33237 (Ste:CG33237), found in Drosophila melanogaster (Fruit fly).